The sequence spans 654 residues: tRNA uridine 5-carboxymethylaminomethyl modification enzyme MnmG (654 aa).

17–22 (GGGHAG) contacts FAD. 289 to 303 (GPRYCPSIEDKIVKF) serves as a coordination point for NAD(+).

This sequence belongs to the MnmG family. In terms of assembly, homodimer. Heterotetramer of two MnmE and two MnmG subunits. FAD serves as cofactor.

The protein resides in the cytoplasm. In terms of biological role, NAD-binding protein involved in the addition of a carboxymethylaminomethyl (cmnm) group at the wobble position (U34) of certain tRNAs, forming tRNA-cmnm(5)s(2)U34. The protein is tRNA uridine 5-carboxymethylaminomethyl modification enzyme MnmG of Prochlorococcus marinus subsp. pastoris (strain CCMP1986 / NIES-2087 / MED4).